A 456-amino-acid chain; its full sequence is Kynurenine 3-monooxygenase (456 aa).

Belongs to the aromatic-ring hydroxylase family. KMO subfamily. FAD serves as cofactor.

It carries out the reaction L-kynurenine + NADPH + O2 + H(+) = 3-hydroxy-L-kynurenine + NADP(+) + H2O. Its pathway is cofactor biosynthesis; NAD(+) biosynthesis; quinolinate from L-kynurenine: step 1/3. Catalyzes the hydroxylation of L-kynurenine (L-Kyn) to form 3-hydroxy-L-kynurenine (L-3OHKyn). Required for synthesis of quinolinic acid. This chain is Kynurenine 3-monooxygenase, found in Xanthomonas campestris pv. campestris (strain B100).